The sequence spans 435 residues: Adenylosuccinate synthetase (435 aa).

Residues 20–26 (GDEGKGK) and 48–50 (GHT) each bind GTP. Catalysis depends on Asp21, which acts as the Proton acceptor. Asp21 and Gly48 together coordinate Mg(2+). Residues 21 to 24 (DEGK), 46 to 49 (NAGH), Thr134, Arg148, Gln229, Thr244, and Arg308 contribute to the IMP site. The active-site Proton donor is His49. 304-310 (TTTGRPR) is a substrate binding site. GTP-binding positions include Arg310, 336–338 (KVD), and 422–424 (SMG).

The protein belongs to the adenylosuccinate synthetase family. Homodimer. Requires Mg(2+) as cofactor.

It localises to the cytoplasm. It carries out the reaction IMP + L-aspartate + GTP = N(6)-(1,2-dicarboxyethyl)-AMP + GDP + phosphate + 2 H(+). It participates in purine metabolism; AMP biosynthesis via de novo pathway; AMP from IMP: step 1/2. Its function is as follows. Plays an important role in the de novo pathway of purine nucleotide biosynthesis. Catalyzes the first committed step in the biosynthesis of AMP from IMP. The chain is Adenylosuccinate synthetase from Thermoplasma acidophilum (strain ATCC 25905 / DSM 1728 / JCM 9062 / NBRC 15155 / AMRC-C165).